We begin with the raw amino-acid sequence, 510 residues long: Proline--tRNA ligase 2 (510 aa).

This sequence belongs to the class-II aminoacyl-tRNA synthetase family. ProS type 3 subfamily. In terms of assembly, homodimer.

The protein resides in the cytoplasm. The catalysed reaction is tRNA(Pro) + L-proline + ATP = L-prolyl-tRNA(Pro) + AMP + diphosphate. In terms of biological role, catalyzes the attachment of proline to tRNA(Pro) in a two-step reaction: proline is first activated by ATP to form Pro-AMP and then transferred to the acceptor end of tRNA(Pro). The protein is Proline--tRNA ligase 2 of Anaeromyxobacter dehalogenans (strain 2CP-C).